We begin with the raw amino-acid sequence, 402 residues long: 5-methylphenazine-1-carboxylate 1-monooxygenase (402 aa).

FAD contacts are provided by residues 14–15 (IG), 35–36 (ES), 43–45 (LGV), Arg106, Val132, Arg191, and Asp310. Basic and acidic residues predominate over residues 368 to 385 (REKEEWAAASRPKTEKSA). Residues 368–402 (REKEEWAAASRPKTEKSAALEAITGSYRNQVERPR) form a disordered region.

As to quaternary structure, monomer in solution. Probably interacts transiently with PhzM. FAD is required as a cofactor.

It catalyses the reaction 5-methyl-phenazine-1-carboxylate + NADH + O2 + 2 H(+) = pyocyanin + CO2 + NAD(+) + H2O. It participates in secondary metabolite biosynthesis; pyocyanine biosynthesis. Involved in the biosynthesis of pyocyanine, a blue-pigmented phenazine derivative, which plays a role in virulence. Catalyzes the oxidative decarboxylation of 5-methylphenazine-1-carboxylate (5-methyl-PCA) to pyocyanine. Can also act on phenazine-1-carboxylate (PCA), converting it into 1-hydroxyphenazine (1-HP). However, PCA is a poor substrate. The polypeptide is 5-methylphenazine-1-carboxylate 1-monooxygenase (Pseudomonas aeruginosa (strain ATCC 15692 / DSM 22644 / CIP 104116 / JCM 14847 / LMG 12228 / 1C / PRS 101 / PAO1)).